Consider the following 428-residue polypeptide: Tyrosine--tRNA ligase (428 aa).

Tyr-41 lines the L-tyrosine pocket. The 'HIGH' region signature appears at 46–55; the sequence is PTADSLHLGH. L-tyrosine-binding residues include Tyr-179 and Gln-183. The short motif at 239 to 243 is the 'KMSKS' region element; sequence KFGKT. Lys-242 lines the ATP pocket. Residues 361–418 enclose the S4 RNA-binding domain; that stretch reads ADLMQALVDAELQPSRGQARKTIASNAVTINGEKQSDPEYIFNDEDRLFGRYTLLRRG.

It belongs to the class-I aminoacyl-tRNA synthetase family. TyrS type 1 subfamily. As to quaternary structure, homodimer.

The protein resides in the cytoplasm. It catalyses the reaction tRNA(Tyr) + L-tyrosine + ATP = L-tyrosyl-tRNA(Tyr) + AMP + diphosphate + H(+). Its function is as follows. Catalyzes the attachment of tyrosine to tRNA(Tyr) in a two-step reaction: tyrosine is first activated by ATP to form Tyr-AMP and then transferred to the acceptor end of tRNA(Tyr). This chain is Tyrosine--tRNA ligase, found in Salmonella paratyphi C (strain RKS4594).